The sequence spans 78 residues: uncharacterized protein (78 aa).

Residues 21–43 form a helical membrane-spanning segment; that stretch reads SPFLFGAPLVGGLLGGFLGSALF.

The protein localises to the membrane. This is an uncharacterized protein from Bacillus subtilis (strain 168).